The chain runs to 245 residues: Lactate utilization protein A (245 aa).

The protein belongs to the LutA/YkgE family.

Its function is as follows. Is involved in L-lactate degradation and allows cells to grow with lactate as the sole carbon source. The protein is Lactate utilization protein A of Exiguobacterium sp. (strain ATCC BAA-1283 / AT1b).